Reading from the N-terminus, the 339-residue chain is Glyceraldehyde-3-phosphate dehydrogenase (339 aa).

NAD(+) is bound by residues 12 to 13 (RI), Asp-39, Arg-84, and Ser-127. D-glyceraldehyde 3-phosphate-binding positions include 157 to 159 (SCT), Thr-188, Arg-203, 216 to 217 (TG), and Arg-239. Residue Cys-158 is the Nucleophile of the active site. Residue Asn-320 coordinates NAD(+).

Belongs to the glyceraldehyde-3-phosphate dehydrogenase family. As to quaternary structure, homotetramer.

It localises to the cytoplasm. It carries out the reaction D-glyceraldehyde 3-phosphate + phosphate + NAD(+) = (2R)-3-phospho-glyceroyl phosphate + NADH + H(+). It functions in the pathway carbohydrate degradation; glycolysis; pyruvate from D-glyceraldehyde 3-phosphate: step 1/5. Its function is as follows. Catalyzes the oxidative phosphorylation of glyceraldehyde 3-phosphate (G3P) to 1,3-bisphosphoglycerate (BPG) using the cofactor NAD. The first reaction step involves the formation of a hemiacetal intermediate between G3P and a cysteine residue, and this hemiacetal intermediate is then oxidized to a thioester, with concomitant reduction of NAD to NADH. The reduced NADH is then exchanged with the second NAD, and the thioester is attacked by a nucleophilic inorganic phosphate to produce BPG. The sequence is that of Glyceraldehyde-3-phosphate dehydrogenase (gap) from Mycobacterium bovis (strain ATCC BAA-935 / AF2122/97).